The chain runs to 492 residues: N-succinylglutamate 5-semialdehyde dehydrogenase (492 aa).

An NAD(+)-binding site is contributed by 220 to 225 (GSANTG). Active-site residues include Glu243 and Cys277.

It belongs to the aldehyde dehydrogenase family. AstD subfamily.

It carries out the reaction N-succinyl-L-glutamate 5-semialdehyde + NAD(+) + H2O = N-succinyl-L-glutamate + NADH + 2 H(+). The protein operates within amino-acid degradation; L-arginine degradation via AST pathway; L-glutamate and succinate from L-arginine: step 4/5. Functionally, catalyzes the NAD-dependent reduction of succinylglutamate semialdehyde into succinylglutamate. This Escherichia coli O157:H7 protein is N-succinylglutamate 5-semialdehyde dehydrogenase.